The chain runs to 291 residues: 3-hydroxy-5-phosphonooxypentane-2,4-dione thiolase (291 aa).

The active-site Schiff-base intermediate with substrate is the Lys203.

The protein belongs to the DeoC/FbaB aldolase family. As to quaternary structure, homodecamer.

The protein localises to the cytoplasm. The catalysed reaction is dihydroxyacetone phosphate + acetyl-CoA = 3-hydroxy-2,4-dioxopentyl phosphate + CoA. Functionally, involved in the degradation of phospho-AI-2, thereby terminating induction of the lsr operon and closing the AI-2 signaling cycle. Catalyzes the transfer of an acetyl moiety from 3-hydroxy-5-phosphonooxypentane-2,4-dione to CoA to form glycerone phosphate and acetyl-CoA. The chain is 3-hydroxy-5-phosphonooxypentane-2,4-dione thiolase from Salmonella paratyphi A (strain ATCC 9150 / SARB42).